The chain runs to 490 residues: Membrane-bound lytic murein transglycosylase F (490 aa).

The signal sequence occupies residues 1–32; the sequence is MFALTAYRLRCAAWLLATGIFLLLAGCSEAKA. The tract at residues 33–269 is non-LT domain; it reads PTALERVQKE…RLKDRYYGHV (237 aa). The segment at 270–490 is LT domain; it reads DVLGYVGAYT…PDDDEGDGKL (221 aa). Glu-316 is a catalytic residue. The disordered stretch occupies residues 467–490; sequence AESGLHLPGVNKTRPDDDEGDGKL.

The protein in the N-terminal section; belongs to the bacterial solute-binding protein 3 family. This sequence in the C-terminal section; belongs to the transglycosylase Slt family.

The protein localises to the cell outer membrane. The catalysed reaction is Exolytic cleavage of the (1-&gt;4)-beta-glycosidic linkage between N-acetylmuramic acid (MurNAc) and N-acetylglucosamine (GlcNAc) residues in peptidoglycan, from either the reducing or the non-reducing ends of the peptidoglycan chains, with concomitant formation of a 1,6-anhydrobond in the MurNAc residue.. Murein-degrading enzyme that degrades murein glycan strands and insoluble, high-molecular weight murein sacculi, with the concomitant formation of a 1,6-anhydromuramoyl product. Lytic transglycosylases (LTs) play an integral role in the metabolism of the peptidoglycan (PG) sacculus. Their lytic action creates space within the PG sacculus to allow for its expansion as well as for the insertion of various structures such as secretion systems and flagella. The protein is Membrane-bound lytic murein transglycosylase F of Pseudomonas paraeruginosa (strain DSM 24068 / PA7) (Pseudomonas aeruginosa (strain PA7)).